The sequence spans 262 residues: Global transcriptional regulator CodY (262 aa).

Positions 1 to 159 (MAHLLEKTRK…ASTVVGIQLL (159 aa)) are GAF domain. Residues 207 to 226 (ASVIADRIGITRSVIVNALR) constitute a DNA-binding region (H-T-H motif).

It belongs to the CodY family.

The protein localises to the cytoplasm. In terms of biological role, DNA-binding global transcriptional regulator which is involved in the adaptive response to starvation and acts by directly or indirectly controlling the expression of numerous genes in response to nutrient availability. During rapid exponential growth, CodY is highly active and represses genes whose products allow adaptation to nutrient depletion. The chain is Global transcriptional regulator CodY from Streptococcus pneumoniae (strain JJA).